The following is a 184-amino-acid chain: Mitochondrial import inner membrane translocase subunit TIM22 (184 aa).

Positions 1-26 (MSLWGVYTGPQPPKKPLQEMTQEEQA) are disordered. Disulfide bonds link C40–C118 and C137–C156. A run of 2 helical transmembrane segments spans residues 45 to 65 (VMAG…MASM) and 151 to 171 (AALV…MYLN).

Belongs to the Tim17/Tim22/Tim23 family. Component of the TIM22 complex, whose core is composed of TIM22 and TIM54, associated with the 70 kDa heterohexamer composed of TIM9 and TIM10 (or TIM8 and TIM13).

It is found in the mitochondrion inner membrane. Functionally, essential core component of the TIM22 complex, a complex that mediates the import and insertion of multi-pass transmembrane proteins into the mitochondrial inner membrane. In the TIM22 complex, it constitutes the voltage-activated and signal-gated channel. Forms a twin-pore translocase that uses the membrane potential as external driving force in 2 voltage-dependent steps. The chain is Mitochondrial import inner membrane translocase subunit TIM22 from Candida albicans (strain SC5314 / ATCC MYA-2876) (Yeast).